The primary structure comprises 260 residues: Flavin-dependent thymidylate synthase (260 aa).

The region spanning 2-203 (ISVKLVSYTN…PRLFKYTGPN (202 aa)) is the ThyX domain. Residues S56, 80–82 (RHR), and Q88 each bind FAD. DUMP-binding positions include 77–80 (QLVR), 88–92 (QMSHR), and R142. The ThyX motif signature appears at 80–90 (RHRIASYTQMS). FAD contacts are provided by residues 158–160 (NAR) and N164. R169 is a binding site for dUMP. R169 acts as the Involved in ionization of N3 of dUMP, leading to its activation in catalysis.

Belongs to the thymidylate synthase ThyX family. As to quaternary structure, homotetramer. FAD is required as a cofactor.

It carries out the reaction dUMP + (6R)-5,10-methylene-5,6,7,8-tetrahydrofolate + NADPH + H(+) = dTMP + (6S)-5,6,7,8-tetrahydrofolate + NADP(+). The protein operates within pyrimidine metabolism; dTTP biosynthesis. In terms of biological role, catalyzes the reductive methylation of 2'-deoxyuridine-5'-monophosphate (dUMP) to 2'-deoxythymidine-5'-monophosphate (dTMP) while utilizing 5,10-methylenetetrahydrofolate (mTHF) as the methyl donor, and NADPH and FADH(2) as the reductant. This Saccharolobus solfataricus (strain ATCC 35092 / DSM 1617 / JCM 11322 / P2) (Sulfolobus solfataricus) protein is Flavin-dependent thymidylate synthase.